The sequence spans 660 residues: UvrABC system protein B (660 aa).

Positions 26-196 (DGIDEKKEHQ…ELNKGQFDVK (171 aa)) constitute a Helicase ATP-binding domain. 39-46 (GVTGSGKT) lines the ATP pocket. Positions 92–115 (YFDFYKPEAYIPKSDLYIEKTSKN) match the Beta-hairpin motif. In terms of domain architecture, Helicase C-terminal spans 431-593 (QIEDIYDHLK…IIPKTIVKPI (163 aa)). The 36-residue stretch at 622-657 (KKFIDQMVRKMTQLAKANKFEEAIEIRDYLIEIGIE) folds into the UVR domain.

Belongs to the UvrB family. As to quaternary structure, forms a heterotetramer with UvrA during the search for lesions. Interacts with UvrC in an incision complex.

It is found in the cytoplasm. The UvrABC repair system catalyzes the recognition and processing of DNA lesions. A damage recognition complex composed of 2 UvrA and 2 UvrB subunits scans DNA for abnormalities. Upon binding of the UvrA(2)B(2) complex to a putative damaged site, the DNA wraps around one UvrB monomer. DNA wrap is dependent on ATP binding by UvrB and probably causes local melting of the DNA helix, facilitating insertion of UvrB beta-hairpin between the DNA strands. Then UvrB probes one DNA strand for the presence of a lesion. If a lesion is found the UvrA subunits dissociate and the UvrB-DNA preincision complex is formed. This complex is subsequently bound by UvrC and the second UvrB is released. If no lesion is found, the DNA wraps around the other UvrB subunit that will check the other stand for damage. This is UvrABC system protein B from Metamycoplasma arthritidis (strain 158L3-1) (Mycoplasma arthritidis).